Here is a 137-residue protein sequence, read N- to C-terminus: Cofilin (137 aa).

One can recognise an ADF-H domain in the interval 5-135; that stretch reads GVKVSPECLE…AYETVLEKVT (131 aa).

This sequence belongs to the actin-binding proteins ADF family.

The protein localises to the cytoplasm. The protein resides in the cytoskeleton. Its subcellular location is the nucleus matrix. Its function is as follows. Controls reversibly actin polymerization and depolymerization in a pH-sensitive manner. It has the ability to bind G- and F-actin in a 1:1 ratio of cofilin to actin. Binding to F-actin is regulated by tropomyosin. It is the major component of intranuclear and cytoplasmic actin rods. Required for accumulation of actin at the cell division site via depolymerizing actin at the cell ends. In association with myosin II has a role in the assembly of the contractile ring via severing actin filaments. Involved in the maintenance of the contractile ring once formed. In association with profilin and capping protein, has a role in the mitotic reorganization of the actin cytoskeleton. Severs actin filaments (F-actin). In Schizosaccharomyces pombe (strain 972 / ATCC 24843) (Fission yeast), this protein is Cofilin (cof1).